We begin with the raw amino-acid sequence, 103 residues long: Small ribosomal subunit protein uS10 (103 aa).

The protein belongs to the universal ribosomal protein uS10 family. As to quaternary structure, part of the 30S ribosomal subunit.

Its function is as follows. Involved in the binding of tRNA to the ribosomes. The chain is Small ribosomal subunit protein uS10 from Nitratiruptor sp. (strain SB155-2).